Reading from the N-terminus, the 119-residue chain is U-scoloptoxin(16)-Er11a (119 aa).

Residues 1–19 (MKSWTAAVLSLGLIYLSIS) form the signal peptide.

Belongs to the scoloptoxin-16 family. Post-translationally, contains 4 disulfide bonds. Expressed by the venom gland.

It is found in the secreted. This is U-scoloptoxin(16)-Er11a from Ethmostigmus rubripes (Giant centipede).